The primary structure comprises 127 residues: Glycine cleavage system H protein (127 aa).

One can recognise a Lipoyl-binding domain in the interval 22 to 104 (KVRIGITDFA…YEKAWMIVVE (83 aa)). At K63 the chain carries N6-lipoyllysine.

It belongs to the GcvH family. The glycine cleavage system is composed of four proteins: P, T, L and H. (R)-lipoate serves as cofactor.

The glycine cleavage system catalyzes the degradation of glycine. The H protein shuttles the methylamine group of glycine from the P protein to the T protein. In terms of biological role, is also involved in protein lipoylation via its role as an octanoyl/lipoyl carrier protein intermediate. This is Glycine cleavage system H protein from Geobacillus sp. (strain WCH70).